We begin with the raw amino-acid sequence, 175 residues long: Large ribosomal subunit protein uL10 (175 aa).

It belongs to the universal ribosomal protein uL10 family. Part of the ribosomal stalk of the 50S ribosomal subunit. The N-terminus interacts with L11 and the large rRNA to form the base of the stalk. The C-terminus forms an elongated spine to which L12 dimers bind in a sequential fashion forming a multimeric L10(L12)X complex.

Functionally, forms part of the ribosomal stalk, playing a central role in the interaction of the ribosome with GTP-bound translation factors. The chain is Large ribosomal subunit protein uL10 from Mycobacterium sp. (strain JLS).